Consider the following 265-residue polypeptide: 3-methyl-2-oxobutanoate hydroxymethyltransferase (265 aa).

Mg(2+) is bound by residues D45 and D84. 3-methyl-2-oxobutanoate is bound by residues 45–46 (DS), D84, and K114. E116 lines the Mg(2+) pocket. The active-site Proton acceptor is E183.

Belongs to the PanB family. As to quaternary structure, homodecamer; pentamer of dimers. Requires Mg(2+) as cofactor.

The protein localises to the cytoplasm. It catalyses the reaction 3-methyl-2-oxobutanoate + (6R)-5,10-methylene-5,6,7,8-tetrahydrofolate + H2O = 2-dehydropantoate + (6S)-5,6,7,8-tetrahydrofolate. It functions in the pathway cofactor biosynthesis; (R)-pantothenate biosynthesis; (R)-pantoate from 3-methyl-2-oxobutanoate: step 1/2. Its function is as follows. Catalyzes the reversible reaction in which hydroxymethyl group from 5,10-methylenetetrahydrofolate is transferred onto alpha-ketoisovalerate to form ketopantoate. This is 3-methyl-2-oxobutanoate hydroxymethyltransferase from Salinibacter ruber (strain DSM 13855 / M31).